The sequence spans 315 residues: DNA-directed RNA polymerase subunit alpha (315 aa).

Residues 1-228 (MLEIEKPKIE…EHLRLFIGLT (228 aa)) form an alpha N-terminal domain (alpha-NTD) region. An alpha C-terminal domain (alpha-CTD) region spans residues 246–315 (DKILEMTIEE…LGLSLRQEDE (70 aa)).

It belongs to the RNA polymerase alpha chain family. Homodimer. The RNAP catalytic core consists of 2 alpha, 1 beta, 1 beta' and 1 omega subunit. When a sigma factor is associated with the core the holoenzyme is formed, which can initiate transcription.

It catalyses the reaction RNA(n) + a ribonucleoside 5'-triphosphate = RNA(n+1) + diphosphate. Its function is as follows. DNA-dependent RNA polymerase catalyzes the transcription of DNA into RNA using the four ribonucleoside triphosphates as substrates. The sequence is that of DNA-directed RNA polymerase subunit alpha from Desulforamulus reducens (strain ATCC BAA-1160 / DSM 100696 / MI-1) (Desulfotomaculum reducens).